Reading from the N-terminus, the 504-residue chain is L-amino-acid oxidase (504 aa).

The N-terminal stretch at 1 to 18 is a signal peptide; the sequence is MNVFFMFSLLFLAALGSC. A disulfide bond links C28 and C191. FAD-binding positions include 61–62, 81–82, R89, and 105–108; these read MS, EA, and GPMR. R108 lines the substrate pocket. N-linked (GlcNAc...) asparagine glycosylation is present at N190. Residue H241 participates in substrate binding. V279 serves as a coordination point for FAD. A disulfide bond links C349 and C430. N-linked (GlcNAc...) asparagine glycosylation occurs at N379. Y390 lines the substrate pocket. FAD contacts are provided by residues E475 and 482–487; that span reads GWIDST. 482–483 contributes to the substrate binding site; sequence GW.

It belongs to the flavin monoamine oxidase family. FIG1 subfamily. Homodimer; non-covalently linked. The cofactor is FAD. In terms of tissue distribution, expressed by the venom gland.

Its subcellular location is the secreted. It catalyses the reaction an L-alpha-amino acid + O2 + H2O = a 2-oxocarboxylate + H2O2 + NH4(+). The catalysed reaction is L-leucine + O2 + H2O = 4-methyl-2-oxopentanoate + H2O2 + NH4(+). Its function is as follows. Catalyzes an oxidative deamination of predominantly hydrophobic and aromatic L-amino acids, thus producing hydrogen peroxide that may contribute to the diverse toxic effects of this enzyme. Shows activity on L-Leu. Exhibits diverse biological activities, such as hemorrhage, hemolysis, edema, antibacterial and antiparasitic activities, as well as regulation of platelet aggregation. Its effect on platelets is controversial, since it either induces aggregation or inhibits agonist-induced aggregation. These different effects are probably due to different experimental conditions. This protein induces apoptosis of cultured HeLa cells. This Gloydius halys (Chinese water mocassin) protein is L-amino-acid oxidase.